We begin with the raw amino-acid sequence, 146 residues long: Ribonuclease H (146 aa).

The RNase H type-1 domain maps to 4–145; that stretch reads ELNKVVIYTD…ADILARSQIS (142 aa). The Mg(2+) site is built by Asp-13, Glu-51, Asp-73, and Asp-137.

Belongs to the RNase H family. As to quaternary structure, monomer. The cofactor is Mg(2+).

It is found in the cytoplasm. The catalysed reaction is Endonucleolytic cleavage to 5'-phosphomonoester.. Functionally, endonuclease that specifically degrades the RNA of RNA-DNA hybrids. The protein is Ribonuclease H of Ehrlichia canis (strain Jake).